Reading from the N-terminus, the 138-residue chain is Basic phospholipase A2 PL-Y (138 aa).

The N-terminal stretch at 1–16 (MRTLWIMAVLLVGVEG) is a signal peptide. Disulfide bonds link Cys42-Cys131, Cys44-Cys60, Cys59-Cys111, Cys65-Cys138, Cys66-Cys104, Cys73-Cys97, and Cys91-Cys102. Tyr43, Gly45, and Gly47 together coordinate Ca(2+). His63 is an active-site residue. Asp64 lines the Ca(2+) pocket. Asp105 is an active-site residue.

Belongs to the phospholipase A2 family. Group II subfamily. D49 sub-subfamily. Ca(2+) is required as a cofactor. In terms of tissue distribution, expressed by the venom gland.

It is found in the secreted. It catalyses the reaction a 1,2-diacyl-sn-glycero-3-phosphocholine + H2O = a 1-acyl-sn-glycero-3-phosphocholine + a fatty acid + H(+). Functionally, snake venom phospholipase A2 (PLA2) that can cleave arachidonate at the sn-2 position from phospholipides in the micellar state or in bilayer membranes. PLA2 catalyzes the calcium-dependent hydrolysis of the 2-acyl groups in 3-sn-phosphoglycerides. The protein is Basic phospholipase A2 PL-Y of Protobothrops flavoviridis (Habu).